The following is a 273-amino-acid chain: uncharacterized protein (273 aa).

10–34 (VITGAATGIGQATAEVFANEGARVI) provides a ligand contact to NAD(+). Residue serine 142 participates in substrate binding. The active-site Proton acceptor is tyrosine 155.

Belongs to the short-chain dehydrogenases/reductases (SDR) family.

This is an uncharacterized protein from Bacillus subtilis (strain 168).